The primary structure comprises 520 residues: 2,3-bisphosphoglycerate-independent phosphoglycerate mutase (520 aa).

Mn(2+)-binding residues include aspartate 13 and serine 63. Catalysis depends on serine 63, which acts as the Phosphoserine intermediate. Residues histidine 124, 154–155, arginine 192, arginine 198, 268–271, and lysine 342 contribute to the substrate site; these read RD and RADR. Mn(2+) is bound by residues aspartate 409, histidine 413, aspartate 450, histidine 451, and histidine 469.

Belongs to the BPG-independent phosphoglycerate mutase family. As to quaternary structure, monomer. It depends on Mn(2+) as a cofactor.

The enzyme catalyses (2R)-2-phosphoglycerate = (2R)-3-phosphoglycerate. Its pathway is carbohydrate degradation; glycolysis; pyruvate from D-glyceraldehyde 3-phosphate: step 3/5. Catalyzes the interconversion of 2-phosphoglycerate and 3-phosphoglycerate. The chain is 2,3-bisphosphoglycerate-independent phosphoglycerate mutase from Colwellia psychrerythraea (strain 34H / ATCC BAA-681) (Vibrio psychroerythus).